The following is a 607-amino-acid chain: Nexilin (607 aa).

Over residues 1–14 (MNDVSQKAEIKEML) the composition is skewed to basic and acidic residues. 2 disordered regions span residues 1–143 (MNDV…EDKM) and 165–268 (ETEA…RRRI). Serine 16 is modified (phosphoserine). Composition is skewed to basic and acidic residues over residues 40–85 (GKFD…RAEQ), 120–143 (KTKDPEDLDREEGNGRTNHEEDKM), 167–221 (EAKK…HMVN), and 228–268 (DRET…RRRI). Residue serine 172 is modified to Phosphoserine. 3 positions are modified to phosphoserine: serine 281, serine 288, and serine 296. Phosphothreonine is present on threonine 301. Disordered regions lie at residues 419–444 (NFHEDDDVDVRPAKKSESPFTHKVNM) and 480–514 (AALQKKREDEEEEEGSIVNGSTTEDEEQTRSGAPW). Serine 495 and serine 500 each carry phosphoserine. At threonine 502 the chain carries Phosphothreonine. The Ig-like domain occupies 513-601 (PWFKKPLRNT…GSAASTCILT (89 aa)).

In terms of assembly, interacts with F-actin.

It is found in the cytoplasm. It localises to the cytoskeleton. The protein localises to the cell junction. The protein resides in the adherens junction. Its subcellular location is the myofibril. It is found in the sarcomere. It localises to the z line. Its function is as follows. Involved in regulating cell migration through association with the actin cytoskeleton. Has an essential role in the maintenance of Z line and sarcomere integrity. This chain is Nexilin, found in Mus musculus (Mouse).